A 690-amino-acid chain; its full sequence is Wilms tumor protein 1-interacting protein homolog (690 aa).

2 disordered regions span residues 151 to 316 and 328 to 372; these read MSAT…VSPR and TLGS…PRSS. Residues 152–186 are compositionally biased toward low complexity; the sequence is SATSPRSSMASSASSSQEHSKYSSPRSSISSNALS. Polar residues-rich tracts occupy residues 204-214, 223-233, 240-261, and 272-292; these read EKYTSPRSSLG, PRSSYASTTSD, PRAS…TSGI, and PRSS…SYSD. Positions 335–357 are enriched in low complexity; it reads SVVSPRSSISSHSSRSSRSSRGS. LIM zinc-binding domains follow at residues 479–540, 544–603, and 604–673; these read GICI…SGFQ, DKCF…TVFA, and PKCA…RLSV.

It belongs to the zyxin/ajuba family. Interacts with prickle3.

The protein resides in the cell junction. Its subcellular location is the adherens junction. The protein localises to the nucleus. Functionally, may monitor slit diaphragm protein assembly, a specialized adherens junction characteristic of podocytes. In case of podocyte injury, it shuttles into the nucleus and acts as a transcription regulator. Plays a role in the regulation of cell morphology and cytoskeletal organization. Acts as a transcriptional corepressor for snai1 and snai2/slug and plays a role in regulating neural crest development. Involved in the organization of the basal body. Involved in cilia growth and positioning. The polypeptide is Wilms tumor protein 1-interacting protein homolog (wtip) (Xenopus laevis (African clawed frog)).